A 461-amino-acid polypeptide reads, in one-letter code: Phytase A (461 aa).

The cysteines at positions 22 and 31 are disulfide-linked. Residues Q41, Y42, R71, H72, R75, and T78 each contribute to the 1D-myo-inositol hexakisphosphate site. Disulfide bonds link C61–C405, C205–C456, C254–C272, and C427–C435. The Nucleophile role is filled by H72. 2 N-linked (GlcNAc...) asparagine glycosylation sites follow: N95 and N110. R155 lines the 1D-myo-inositol hexakisphosphate pocket. N197 carries an N-linked (GlcNAc...) asparagine glycan. K291 contributes to the 1D-myo-inositol hexakisphosphate binding site. 2 N-linked (GlcNAc...) asparagine glycosylation sites follow: N329 and N343. 2 residues coordinate 1D-myo-inositol hexakisphosphate: H352 and D353. N367 carries N-linked (GlcNAc...) asparagine glycosylation.

Belongs to the histidine acid phosphatase family. In terms of assembly, monomer. Glycosylated.

It is found in the secreted. The catalysed reaction is 1D-myo-inositol hexakisphosphate + H2O = 1D-myo-inositol 1,2,4,5,6-pentakisphosphate + phosphate. The enzyme catalyses 1D-myo-inositol 1,2,4,5,6-pentakisphosphate + H2O = 1D-myo-inositol 1,2,5,6-tetrakisphosphate + phosphate. It carries out the reaction 1D-myo-inositol 1,2,5,6-tetrakisphosphate + H2O = 1D-myo-inositol 1,2,6-trisphosphate + phosphate. It catalyses the reaction 1D-myo-inositol 1,2,6-trisphosphate + H2O = 1D-myo-inositol 1,2-bisphosphate + phosphate. The catalysed reaction is 1D-myo-inositol 1,2-bisphosphate + H2O = 1D-myo-inositol 2-phosphate + phosphate. Catalyzes the phosphate monoester hydrolysis of phytic acid (myo-inositol hexakisphosphate), which results in the stepwise formation of myo-inositol pentakis-, tetrakis-, tris-, bis-, and monophosphates, as well as the liberation of inorganic phosphate. Myo-inositol 2-monophosphate is the end product. In Penicillium oxalicum, this protein is Phytase A.